The sequence spans 208 residues: Proheparin-binding EGF-like growth factor (208 aa).

Residues 1–19 (MKLLPSVVLKLLLAAVLSA) form the signal peptide. A propeptide spanning residues 20–62 (LVTGESLEQLRRGLAAGTSNPDPSTGSTDQLLRLGGGRDRKVR) is cleaved from the precursor. Residues 20–160 (LVTGESLEQL…ENRLYTYDHT (141 aa)) lie on the Extracellular side of the membrane. Positions 34–55 (AAGTSNPDPSTGSTDQLLRLGG) are disordered. Polar residues predominate over residues 36-49 (GTSNPDPSTGSTDQ). 2 O-linked (GalNAc...) threonine glycosylation sites follow: threonine 75 and threonine 85. The disordered stretch occupies residues 81-104 (QALATPSKEEHGKRKKKGKGLGKK). Over residues 93–102 (KRKKKGKGLG) the composition is skewed to basic residues. Residues 104 to 144 (KRDPCLRKYKDFCIHGECKYVKELRAPSCICHPGYHGERCH) form the EGF-like domain. 3 disulfide bridges follow: cysteine 108-cysteine 121, cysteine 116-cysteine 132, and cysteine 134-cysteine 143. The segment at 136–148 (PGYHGERCHGLSL) is toxin-binding domain. The propeptide at 149 to 208 (PVENRLYTYDHTTILAVVAVVLSSVCLLVIVGLLMFRYHRRGGYDVENEEKVKLGMTNSH) is C-terminal. A helical membrane pass occupies residues 161-184 (TILAVVAVVLSSVCLLVIVGLLMF). The Cytoplasmic segment spans residues 185 to 208 (RYHRRGGYDVENEEKVKLGMTNSH).

Interacts with EGFR and ERBB4. Interacts with FBLN1. In terms of processing, O-glycosylated.

The protein localises to the secreted. It localises to the extracellular space. Its subcellular location is the cell membrane. Growth factor that mediates its effects via EGFR, ERBB2 and ERBB4. Required for normal cardiac valve formation and normal heart function. Promotes smooth muscle cell proliferation. May be involved in macrophage-mediated cellular proliferation. It is mitogenic for fibroblasts, but not endothelial cells. It is able to bind EGF receptor/EGFR with higher affinity than EGF itself and is a far more potent mitogen for smooth muscle cells than EGF. Also acts as a diphtheria toxin receptor. The protein is Proheparin-binding EGF-like growth factor (HBEGF) of Chlorocebus aethiops (Green monkey).